We begin with the raw amino-acid sequence, 387 residues long: Capsid protein (387 aa).

Basic residues predominate over residues 1 to 33 (MARTKSKPRKRTTVRKARRSVKRRTTTKGTKRK). 2 disordered regions span residues 1–47 (MART…RGVA) and 365–387 (KSAK…REFN). 2 consecutive short sequence motifs (nuclear localization signal) follow at residues 8-15 (PRKRTTVR) and 30-37 (TKRKTAGD). Positions 370–379 (NDQLNNNQDA) are enriched in low complexity.

The protein localises to the host nucleus. It is found in the virion. Self-assembles to form the virion icosahedral capsid. The polypeptide is Capsid protein (Chaetoceros protobacilladnavirus 2 (Chaetoceros sp. DNA virus 7)).